The following is a 234-amino-acid chain: N-(5'-phosphoribosyl)anthranilate isomerase 1 (234 aa).

It belongs to the TrpF family.

The enzyme catalyses N-(5-phospho-beta-D-ribosyl)anthranilate = 1-(2-carboxyphenylamino)-1-deoxy-D-ribulose 5-phosphate. It functions in the pathway amino-acid biosynthesis; L-tryptophan biosynthesis; L-tryptophan from chorismate: step 3/5. This chain is N-(5'-phosphoribosyl)anthranilate isomerase 1 (trpF1), found in Methanosarcina mazei (strain ATCC BAA-159 / DSM 3647 / Goe1 / Go1 / JCM 11833 / OCM 88) (Methanosarcina frisia).